The chain runs to 353 residues: 3-dehydroquinate synthase (353 aa).

NAD(+) is bound by residues 61–66, 119–120, K132, and K141; these read DGEEAK and TT. Zn(2+) contacts are provided by E174, H238, and H254.

Belongs to the sugar phosphate cyclases superfamily. Dehydroquinate synthase family. Co(2+) serves as cofactor. The cofactor is Zn(2+). Requires NAD(+) as cofactor.

It localises to the cytoplasm. The catalysed reaction is 7-phospho-2-dehydro-3-deoxy-D-arabino-heptonate = 3-dehydroquinate + phosphate. It participates in metabolic intermediate biosynthesis; chorismate biosynthesis; chorismate from D-erythrose 4-phosphate and phosphoenolpyruvate: step 2/7. Functionally, catalyzes the conversion of 3-deoxy-D-arabino-heptulosonate 7-phosphate (DAHP) to dehydroquinate (DHQ). The sequence is that of 3-dehydroquinate synthase from Sulfolobus acidocaldarius (strain ATCC 33909 / DSM 639 / JCM 8929 / NBRC 15157 / NCIMB 11770).